We begin with the raw amino-acid sequence, 437 residues long: Cytochrome b (437 aa).

The helical transmembrane segment at 45 to 65 (WIWGIVLAFTLVLQIVTGIVL) threads the bilayer. 2 residues coordinate heme b: His-97 and His-111. 9 consecutive transmembrane segments (helical) span residues 100 to 120 (GASL…YYGS), 129 to 149 (WIVG…GYVL), 156 to 176 (FWGA…GPSI), 194 to 214 (FFSL…IHIW), 248 to 268 (FVIK…AVVA), 298 to 318 (FLPF…VILV), 330 to 350 (FFGV…PWLD), 365 to 385 (MWFW…AMPT), and 391 to 411 (WISL…LPLL). Positions 198 and 212 each coordinate heme b.

It belongs to the cytochrome b family. As to quaternary structure, the main subunits of complex b-c1 are: cytochrome b, cytochrome c1 and the Rieske protein. Heme b is required as a cofactor.

It localises to the cell membrane. Functionally, component of the ubiquinol-cytochrome c reductase complex (complex III or cytochrome b-c1 complex), which is a respiratory chain that generates an electrochemical potential coupled to ATP synthesis. The chain is Cytochrome b (petB) from Rhodobacter capsulatus (strain ATCC BAA-309 / NBRC 16581 / SB1003).